The following is a 267-amino-acid chain: B3 domain-containing protein At3g11580 (267 aa).

Residues 29-143 (FEKSLTPSDV…RLFIGWRRRG (115 aa)) constitute a DNA-binding region (TF-B3).

It is found in the nucleus. This Arabidopsis thaliana (Mouse-ear cress) protein is B3 domain-containing protein At3g11580 (ARF32).